Consider the following 428-residue polypeptide: Histidine--tRNA ligase (428 aa).

The protein belongs to the class-II aminoacyl-tRNA synthetase family. As to quaternary structure, homodimer.

It is found in the cytoplasm. The enzyme catalyses tRNA(His) + L-histidine + ATP = L-histidyl-tRNA(His) + AMP + diphosphate + H(+). This chain is Histidine--tRNA ligase (hisS), found in Chlamydia muridarum (strain MoPn / Nigg).